Consider the following 197-residue polypeptide: Glycerol-3-phosphate acyltransferase (197 aa).

Transmembrane regions (helical) follow at residues 1-21, 78-98, 111-131, 136-155, and 159-176; these read MNILIIFASYLLGSLPTGFLI, LIEVIAGISAISGHIWPIWLG, MFLALSWKVGLASLGIFLIVL, FVSLSSISAAILLPIFMFFY, and FIHTYFFISLIVALLVIW.

It belongs to the PlsY family. As to quaternary structure, probably interacts with PlsX.

The protein localises to the cell inner membrane. It carries out the reaction an acyl phosphate + sn-glycerol 3-phosphate = a 1-acyl-sn-glycero-3-phosphate + phosphate. It functions in the pathway lipid metabolism; phospholipid metabolism. Functionally, catalyzes the transfer of an acyl group from acyl-phosphate (acyl-PO(4)) to glycerol-3-phosphate (G3P) to form lysophosphatidic acid (LPA). This enzyme utilizes acyl-phosphate as fatty acyl donor, but not acyl-CoA or acyl-ACP. The chain is Glycerol-3-phosphate acyltransferase from Prochlorococcus marinus (strain MIT 9215).